The sequence spans 253 residues: RNA polymerase sigma-F factor (253 aa).

The Polymerase core binding signature appears at 61–74; the sequence is DLFQIGCIGLLKSV. A DNA-binding region (H-T-H motif) is located at residues 221 to 240; sequence QSEVAARLGISQVQVSRLEK.

It belongs to the sigma-70 factor family.

In terms of biological role, sigma factors are initiation factors that promote the attachment of RNA polymerase to specific initiation sites and are then released. This sigma factor is responsible for the expression of sporulation specific genes. It is responsible for directing gene expression in the forespore compartment of developing cells of Bacillus. The sequence is that of RNA polymerase sigma-F factor (sigF) from Priestia megaterium (Bacillus megaterium).